A 156-amino-acid chain; its full sequence is Small ribosomal subunit protein uS7 (156 aa).

The protein belongs to the universal ribosomal protein uS7 family. In terms of assembly, part of the 30S ribosomal subunit. Contacts proteins S9 and S11.

Functionally, one of the primary rRNA binding proteins, it binds directly to 16S rRNA where it nucleates assembly of the head domain of the 30S subunit. Is located at the subunit interface close to the decoding center, probably blocks exit of the E-site tRNA. This chain is Small ribosomal subunit protein uS7, found in Clostridium perfringens (strain ATCC 13124 / DSM 756 / JCM 1290 / NCIMB 6125 / NCTC 8237 / Type A).